The following is a 1318-amino-acid chain: 1-phosphatidylinositol 4,5-bisphosphate phosphodiesterase classes I and II (1318 aa).

One can recognise a PI-PLC X-box domain in the interval 318-466; that stretch reads DDMDQPMSHY…LRRKIIIKNK (149 aa). Residues His-333 and His-378 contribute to the active site. Positions 464 and 466 each coordinate substrate. The span at 466–481 shows a compositional bias: basic residues; that stretch reads KKKHHHHHHHHHHKKP. Disordered regions lie at residues 466–489 and 505–594; these read KKKHHHHHHHHHHKKPAQVGTPAA and QQVG…KETE. 2 stretches are compositionally biased toward low complexity: residues 528–543 and 554–563; these read ATGTGTGSAAGTAGHA and KDSTGSSDSD. Positions 571-580 are enriched in polar residues; sequence LPNTTPNLPS. The span at 585–594 shows a compositional bias: basic and acidic residues; it reads PPEKAQKETE. Positions 599–715 constitute a PI-PLC Y-box domain; it reads ISALVNYVQP…GYLLKPEFMR (117 aa). Substrate-binding residues include Ser-628 and Arg-655. Positions 715–843 constitute a C2 domain; the sequence is RRSDRRLDPF…NLRSEVGQPI (129 aa). 2 disordered regions span residues 1080–1112 and 1296–1318; these read LDLGDSSEESAAADAGEDLAGGSSSLDGRTQES and GSHSAISPAKSHNSIAAAAEMKT. The span at 1088–1107 shows a compositional bias: low complexity; sequence ESAAADAGEDLAGGSSSLDG.

As to expression, expressed in neuronal cell bodies of the optic lobe, central brain, and thoracic ganglia in adults, and the brain of larvae.

It carries out the reaction a 1,2-diacyl-sn-glycero-3-phospho-(1D-myo-inositol-4,5-bisphosphate) + H2O = 1D-myo-inositol 1,4,5-trisphosphate + a 1,2-diacyl-sn-glycerol + H(+). Functionally, the production of the second messenger molecules diacylglycerol (DAG) and inositol 1,4,5-trisphosphate (IP3) is mediated by activated phosphatidylinositol-specific phospholipase C enzymes. In Drosophila melanogaster (Fruit fly), this protein is 1-phosphatidylinositol 4,5-bisphosphate phosphodiesterase classes I and II (Plc21C).